We begin with the raw amino-acid sequence, 99 residues long: Acylphosphatase (99 aa).

Positions Ile-5 to Ser-97 constitute an Acylphosphatase-like domain. Residues Arg-20 and Asn-38 contribute to the active site.

The protein belongs to the acylphosphatase family.

It carries out the reaction an acyl phosphate + H2O = a carboxylate + phosphate + H(+). This chain is Acylphosphatase (acyP), found in Rhodopseudomonas palustris (strain BisB5).